Here is a 635-residue protein sequence, read N- to C-terminus: Moesin/ezrin/radixin homolog 2 (635 aa).

Residues L12–R305 form the FERM domain.

As to quaternary structure, interacts with Moe and arm at the adherens junction. Forms a complex with Kibra and Ex. Interacts (via FERM domain) with Sav (via FBM motif). Interacts with Schip1. In terms of tissue distribution, expressed predominantly in the germline. Expressed in the developing oocyte from stage 6 to the end of oogenesis and in the apical ends of follical cells from stage 10. Ubiquitous expression throughout embryogenesis with enhanced expression in mesoderm of early embryos and midgut of late embryos. In embryonic CNS, expression is seen in neuropil and developing brain and is enhanced in neuronal cell bodies. In embryonic PNS, expression is seen within the cell body. In third instar larvae, expression is uniform in the eye imaginal disk and is enhanced at the morphogenetic furrow. In pupal eyes, expression is seen in the cytoplasm of secondary and tertiary pigment cells, bristle precursor cells and rhabdomeres.

It localises to the cell junction. Its subcellular location is the adherens junction. It is found in the cell membrane. The protein resides in the cytoplasm. The protein localises to the cytoskeleton. It localises to the apical cell membrane. Its subcellular location is the cell projection. It is found in the rhabdomere. Regulator of the Hippo/SWH (Sav/Wts/Hpo) signaling pathway, a signaling pathway that plays a pivotal role in organ size control and tumor suppression by restricting proliferation and promoting apoptosis. The core of this pathway is composed of a kinase cascade wherein Hippo (Hpo), in complex with its regulatory protein Salvador (Sav), phosphorylates and activates Warts (Wts) in complex with its regulatory protein Mats, which in turn phosphorylates and inactivates the Yorkie (Yki) oncoprotein. Mer acts synergistically along with Ex and Kibra to regulate the Hippo signaling pathway. The sequence is that of Moesin/ezrin/radixin homolog 2 (Mer) from Drosophila melanogaster (Fruit fly).